The following is a 444-amino-acid chain: Divalent metal cation transporter MntH (444 aa).

Helical transmembrane passes span 31 to 51 (GGHW…VSVG), 68 to 88 (FGYL…VLQG), 115 to 135 (LALW…EVIG), 146 to 166 (IPLT…LLLM), 175 to 195 (AFVM…IALA), 212 to 232 (VVTN…TVMP), 267 to 287 (VALM…AAVF), 303 to 323 (ALLA…VALL), 356 to 376 (LLTR…YGEA), 381 to 401 (LLVL…IPLV), and 413 to 433 (LVAP…IVGL).

It belongs to the NRAMP family.

The protein localises to the cell inner membrane. In terms of biological role, h(+)-stimulated, divalent metal cation uptake system. The sequence is that of Divalent metal cation transporter MntH from Xanthomonas campestris pv. campestris (strain ATCC 33913 / DSM 3586 / NCPPB 528 / LMG 568 / P 25).